The chain runs to 364 residues: GDP-fucose transporter 1 (364 aa).

8 helical membrane-spanning segments follow: residues 34–56 (FLLR…ISMV), 76–98 (VTFY…AACC), 111–130 (LRVA…MITF), 140–162 (VAFY…YLLL), 167–185 (SFYA…WLGV), 195–214 (SWLG…LNAI), 227–249 (IWRL…LLLL), and 264–286 (AHFW…VTGL).

Belongs to the TPT transporter family. SLC35C subfamily.

Its subcellular location is the golgi apparatus membrane. The enzyme catalyses GMP(out) + GDP-beta-L-fucose(in) = GMP(in) + GDP-beta-L-fucose(out). In terms of biological role, antiporter specific for GDP-l-fucose and depending on the concomitant reverse transport of GMP. Involved in GDP-fucose import from the cytoplasm into the Golgi lumen. This Homo sapiens (Human) protein is GDP-fucose transporter 1.